The primary structure comprises 60 residues: Large ribosomal subunit protein eL37 (60 aa).

Zn(2+) contacts are provided by cysteine 18, cysteine 21, cysteine 33, and cysteine 36. A C4-type zinc finger spans residues 18-36; that stretch reads CRRCGKNSYHVRKKVCAAC.

Belongs to the eukaryotic ribosomal protein eL37 family. The cofactor is Zn(2+).

In terms of biological role, binds to the 23S rRNA. The polypeptide is Large ribosomal subunit protein eL37 (rpl37e) (Methanothermobacter thermautotrophicus (strain ATCC 29096 / DSM 1053 / JCM 10044 / NBRC 100330 / Delta H) (Methanobacterium thermoautotrophicum)).